The following is a 62-amino-acid chain: Protein DsrB (62 aa).

This sequence belongs to the DsrB family.

The sequence is that of Protein DsrB from Escherichia fergusonii (strain ATCC 35469 / DSM 13698 / CCUG 18766 / IAM 14443 / JCM 21226 / LMG 7866 / NBRC 102419 / NCTC 12128 / CDC 0568-73).